The chain runs to 120 residues: NAD(P)H-quinone oxidoreductase subunit 3 (120 aa).

The next 3 helical transmembrane spans lie at 7–27 (YEYF…SLTA), 64–84 (MFAL…PWAV), and 89–109 (LGLL…VALV).

This sequence belongs to the complex I subunit 3 family. In terms of assembly, NDH-1 can be composed of about 15 different subunits; different subcomplexes with different compositions have been identified which probably have different functions.

The protein localises to the cellular thylakoid membrane. The catalysed reaction is a plastoquinone + NADH + (n+1) H(+)(in) = a plastoquinol + NAD(+) + n H(+)(out). It carries out the reaction a plastoquinone + NADPH + (n+1) H(+)(in) = a plastoquinol + NADP(+) + n H(+)(out). Its function is as follows. NDH-1 shuttles electrons from an unknown electron donor, via FMN and iron-sulfur (Fe-S) centers, to quinones in the respiratory and/or the photosynthetic chain. The immediate electron acceptor for the enzyme in this species is believed to be plastoquinone. Couples the redox reaction to proton translocation, and thus conserves the redox energy in a proton gradient. Cyanobacterial NDH-1 also plays a role in inorganic carbon-concentration. This chain is NAD(P)H-quinone oxidoreductase subunit 3, found in Microcystis aeruginosa (strain NIES-843 / IAM M-2473).